The chain runs to 269 residues: Energy-coupling factor transporter ATP-binding protein EcfA1 (269 aa).

The 235-residue stretch at 8–242 (IVFKNVSFQY…AEELTRIGLD (235 aa)) folds into the ABC transporter domain. Residue 42 to 49 (GHNGSGKS) coordinates ATP.

It belongs to the ABC transporter superfamily. Energy-coupling factor EcfA family. In terms of assembly, forms a stable energy-coupling factor (ECF) transporter complex composed of 2 membrane-embedded substrate-binding proteins (S component), 2 ATP-binding proteins (A component) and 2 transmembrane proteins (T component).

Its subcellular location is the cell membrane. In terms of biological role, ATP-binding (A) component of a common energy-coupling factor (ECF) ABC-transporter complex. Unlike classic ABC transporters this ECF transporter provides the energy necessary to transport a number of different substrates. The protein is Energy-coupling factor transporter ATP-binding protein EcfA1 of Staphylococcus aureus (strain USA300).